Here is a 462-residue protein sequence, read N- to C-terminus: Argininosuccinate lyase (462 aa).

The protein belongs to the lyase 1 family. Argininosuccinate lyase subfamily.

It is found in the cytoplasm. The enzyme catalyses 2-(N(omega)-L-arginino)succinate = fumarate + L-arginine. Its pathway is amino-acid biosynthesis; L-arginine biosynthesis; L-arginine from L-ornithine and carbamoyl phosphate: step 3/3. The sequence is that of Argininosuccinate lyase from Xanthobacter autotrophicus (strain ATCC BAA-1158 / Py2).